Reading from the N-terminus, the 118-residue chain is Large ribosomal subunit protein bL20 (118 aa).

This sequence belongs to the bacterial ribosomal protein bL20 family.

Binds directly to 23S ribosomal RNA and is necessary for the in vitro assembly process of the 50S ribosomal subunit. It is not involved in the protein synthesizing functions of that subunit. This is Large ribosomal subunit protein bL20 from Francisella tularensis subsp. novicida (strain U112).